The sequence spans 250 residues: Small ribosomal subunit protein uS3 (250 aa).

One can recognise a KH type-2 domain in the interval 39–107 (VREFLTKKLK…PAQVSINEID (69 aa)). Residues 215 to 250 (MNPAPAEERPAKRGRGRGEGQERRGRRGDRAADKGE) form a disordered region. Residues 220–250 (AEERPAKRGRGRGEGQERRGRRGDRAADKGE) are compositionally biased toward basic and acidic residues.

Belongs to the universal ribosomal protein uS3 family. As to quaternary structure, part of the 30S ribosomal subunit. Forms a tight complex with proteins S10 and S14.

Functionally, binds the lower part of the 30S subunit head. Binds mRNA in the 70S ribosome, positioning it for translation. The polypeptide is Small ribosomal subunit protein uS3 (Acinetobacter baumannii (strain AB307-0294)).